A 336-amino-acid polypeptide reads, in one-letter code: DNA-directed RNA polymerase subunit alpha (336 aa).

An alpha N-terminal domain (alpha-NTD) region spans residues 1-232 (MIQKNWQELI…DQLGLFVNFE (232 aa)). The tract at residues 248 to 336 (FNPALLKKVD…ELAKRYEDQY (89 aa)) is alpha C-terminal domain (alpha-CTD).

This sequence belongs to the RNA polymerase alpha chain family. In terms of assembly, homodimer. The RNAP catalytic core consists of 2 alpha, 1 beta, 1 beta' and 1 omega subunit. When a sigma factor is associated with the core the holoenzyme is formed, which can initiate transcription.

The enzyme catalyses RNA(n) + a ribonucleoside 5'-triphosphate = RNA(n+1) + diphosphate. DNA-dependent RNA polymerase catalyzes the transcription of DNA into RNA using the four ribonucleoside triphosphates as substrates. In Chelativorans sp. (strain BNC1), this protein is DNA-directed RNA polymerase subunit alpha.